The following is a 318-amino-acid chain: Glutathione synthetase (318 aa).

Positions 133 to 317 (KMYALQFTSV…LGQQVMAWLF (185 aa)) constitute an ATP-grasp domain. Position 159–215 (159–215 (VQQQGMAVLKPLGGKGGEGILFLQAGDRNLNSMIEISTQRGQLPVMLQEYLPAAKEG)) interacts with ATP. The Mg(2+) site is built by Glu288 and Asn290.

This sequence belongs to the prokaryotic GSH synthase family. The cofactor is Mg(2+). It depends on Mn(2+) as a cofactor.

The enzyme catalyses gamma-L-glutamyl-L-cysteine + glycine + ATP = glutathione + ADP + phosphate + H(+). It participates in sulfur metabolism; glutathione biosynthesis; glutathione from L-cysteine and L-glutamate: step 2/2. This is Glutathione synthetase from Thermosynechococcus vestitus (strain NIES-2133 / IAM M-273 / BP-1).